The following is a 142-amino-acid chain: Maximins y/Hw (142 aa).

A signal peptide spans 1–18 (MIFKYIVAVSFLIASGYA). Residues 19 to 43 (RSVKNDEQSLSQREVLEEESLREIR) constitute a propeptide that is removed on maturation. Phenylalanine 68 is modified (phenylalanine amide). Residues 72-121 (TAEDHEVMKRLEAVIRDLDSLDHSEEASERETRGFNQEEIANLFTKKEKR) constitute a propeptide that is removed on maturation. Isoleucine 141 is modified (isoleucine amide).

This sequence belongs to the bombinin family. In terms of tissue distribution, expressed by the skin glands.

The protein localises to the secreted. Maximin-y shows antimicrobial activity against bacteria and against the fungus C.albicans. It has little hemolytic activity. Its function is as follows. Maximin-Hw shows antimicrobial activity against bacteria and against the fungus C.albicans. Shows strong hemolytic activity. This Bombina maxima (Giant fire-bellied toad) protein is Maximins y/Hw.